Here is a 352-residue protein sequence, read N- to C-terminus: tRNA (guanine(26)-N(2))-dimethyltransferase (352 aa).

The Trm1 methyltransferase domain maps to 4–350; sequence ILNKEGAVEF…ANYDEIARIL (347 aa). Positions 39, 65, 83, 109, and 110 each coordinate S-adenosyl-L-methionine.

It belongs to the class I-like SAM-binding methyltransferase superfamily. Trm1 family.

The enzyme catalyses guanosine(26) in tRNA + 2 S-adenosyl-L-methionine = N(2)-dimethylguanosine(26) in tRNA + 2 S-adenosyl-L-homocysteine + 2 H(+). Its function is as follows. Dimethylates a single guanine residue at position 26 of a number of tRNAs using S-adenosyl-L-methionine as donor of the methyl groups. This chain is tRNA (guanine(26)-N(2))-dimethyltransferase, found in Pyrobaculum islandicum (strain DSM 4184 / JCM 9189 / GEO3).